A 1299-amino-acid chain; its full sequence is DNA-directed RNA polymerase subunit beta' (1299 aa).

Positions 60, 62, 75, and 78 each coordinate Zn(2+). Asp-535, Asp-537, and Asp-539 together coordinate Mg(2+). Cys-877, Cys-954, Cys-961, and Cys-964 together coordinate Zn(2+).

It belongs to the RNA polymerase beta' chain family. As to quaternary structure, the RNAP catalytic core consists of 2 alpha, 1 beta, 1 beta' and 1 omega subunit. When a sigma factor is associated with the core the holoenzyme is formed, which can initiate transcription. Mg(2+) serves as cofactor. Requires Zn(2+) as cofactor.

It carries out the reaction RNA(n) + a ribonucleoside 5'-triphosphate = RNA(n+1) + diphosphate. DNA-dependent RNA polymerase catalyzes the transcription of DNA into RNA using the four ribonucleoside triphosphates as substrates. The polypeptide is DNA-directed RNA polymerase subunit beta' (Pseudarthrobacter chlorophenolicus (strain ATCC 700700 / DSM 12829 / CIP 107037 / JCM 12360 / KCTC 9906 / NCIMB 13794 / A6) (Arthrobacter chlorophenolicus)).